Reading from the N-terminus, the 419-residue chain is UDP-N-acetylglucosamine 1-carboxyvinyltransferase (419 aa).

Position 22-23 (22-23 (KN)) interacts with phosphoenolpyruvate. Residue R93 participates in UDP-N-acetyl-alpha-D-glucosamine binding. C117 (proton donor) is an active-site residue. Position 117 is a 2-(S-cysteinyl)pyruvic acid O-phosphothioketal (C117). Positions 306 and 328 each coordinate UDP-N-acetyl-alpha-D-glucosamine.

Belongs to the EPSP synthase family. MurA subfamily.

Its subcellular location is the cytoplasm. The enzyme catalyses phosphoenolpyruvate + UDP-N-acetyl-alpha-D-glucosamine = UDP-N-acetyl-3-O-(1-carboxyvinyl)-alpha-D-glucosamine + phosphate. Its pathway is cell wall biogenesis; peptidoglycan biosynthesis. In terms of biological role, cell wall formation. Adds enolpyruvyl to UDP-N-acetylglucosamine. This Vesicomyosocius okutanii subsp. Calyptogena okutanii (strain HA) protein is UDP-N-acetylglucosamine 1-carboxyvinyltransferase.